The primary structure comprises 131 residues: Small ribosomal subunit protein uS11 (131 aa).

Belongs to the universal ribosomal protein uS11 family. As to quaternary structure, part of the 30S ribosomal subunit. Interacts with proteins S7 and S18. Binds to IF-3.

Functionally, located on the platform of the 30S subunit, it bridges several disparate RNA helices of the 16S rRNA. Forms part of the Shine-Dalgarno cleft in the 70S ribosome. This is Small ribosomal subunit protein uS11 from Neisseria gonorrhoeae (strain ATCC 700825 / FA 1090).